Reading from the N-terminus, the 3479-residue chain is Abnormal spindle-like microcephaly-associated protein homolog (3479 aa).

The interval 1 to 29 (MANRRVGRGCWEVSPTERRPPAALRGPAT) is disordered. Serine 280, serine 283, serine 367, serine 392, serine 425, and serine 605 each carry phosphoserine. The region spanning 920-1056 (KASKEILLAF…LLWKIAFAFQ (137 aa)) is the Calponin-homology (CH) 1 domain. Residues 1057–1078 (VDISLNLDQLKEEIAFLKHTKS) adopt a coiled-coil conformation. Position 1103 is a phosphoserine (serine 1103). A Calponin-homology (CH) 2 domain is found at 1110–1261 (SENIKLLMDW…YLSFLCARLL (152 aa)). 37 consecutive IQ domains span residues 1347–1378 (QNKA…IILQ), 1393–1422 (YLWA…MLKS), 1582–1613 (LKKT…VIIQ), 1605–1634 (MKKA…KTRS), 1632–1661 (TRSA…SVIK), 1655–1684 (ILTS…TTIK), 1728–1757 (MRES…AVIS), 1751–1782 (QRKA…MVIQ), 1801–1830 (VKKA…AALK), 1824–1853 (QSIA…SIIK), 1874–1903 (TKAA…AALK), 1897–1928 (EHQA…LVIQ), 1947–1978 (LRHA…IIIQ), 1970–2001 (QHKC…LLIQ), 2020–2049 (TKAA…AAVT), 2043–2074 (CNKA…IIIQ), 2093–2124 (LKKT…TFIK), 2116–2147 (MHRA…IVIQ), 2239–2270 (LRHS…TLIQ), 2262–2293 (MHVA…VWIQ), 2311–2342 (VQNA…TFIQ), 2334–2365 (MHRA…VVIQ), 2384–2415 (QRRS…TLIQ), 2407–2438 (MHSS…IFVQ), 2533–2564 (QWHS…IIIQ), 2627–2656 (QHQA…TVVS), 2668–2699 (RTQA…TLIQ), 2691–2722 (MHRA…VVIQ), 2741–2770 (VQKS…EKMA), 2817–2848 (QSRA…RIQF), 2862–2893 (QKRA…VVLQ), 2912–2941 (IRSS…STIK), 2935–2966 (IKNS…KIQA), 2957–2988 (KVKA…KIIQ), 3032–3063 (RHRA…LIIQ), 3082–3113 (FKKS…RLLH), and 3206–3237 (FTSG…IRLS).

The protein resides in the cytoplasm. Its subcellular location is the cytoskeleton. It localises to the spindle. The protein localises to the nucleus. Probable role in mitotic spindle regulation and coordination of mitotic processes. May have a preferential role in regulating neurogenesis. In Macaca mulatta (Rhesus macaque), this protein is Abnormal spindle-like microcephaly-associated protein homolog (ASPM).